The following is a 261-amino-acid chain: NAD(P)H-quinone oxidoreductase subunit K, chloroplastic (261 aa).

4 residues coordinate [4Fe-4S] cluster: Cys64, Cys65, Cys129, and Cys160.

It belongs to the complex I 20 kDa subunit family. NDH is composed of at least 16 different subunits, 5 of which are encoded in the nucleus. The cofactor is [4Fe-4S] cluster.

It localises to the plastid. The protein resides in the chloroplast thylakoid membrane. It carries out the reaction a plastoquinone + NADH + (n+1) H(+)(in) = a plastoquinol + NAD(+) + n H(+)(out). The enzyme catalyses a plastoquinone + NADPH + (n+1) H(+)(in) = a plastoquinol + NADP(+) + n H(+)(out). In terms of biological role, NDH shuttles electrons from NAD(P)H:plastoquinone, via FMN and iron-sulfur (Fe-S) centers, to quinones in the photosynthetic chain and possibly in a chloroplast respiratory chain. The immediate electron acceptor for the enzyme in this species is believed to be plastoquinone. Couples the redox reaction to proton translocation, and thus conserves the redox energy in a proton gradient. The protein is NAD(P)H-quinone oxidoreductase subunit K, chloroplastic of Physcomitrium patens (Spreading-leaved earth moss).